Consider the following 168-residue polypeptide: uncharacterized protein (168 aa).

Residues 19–80 enclose the HTH asnC-type domain; sequence LDKLDRHILN…VVSPKAVGRT (62 aa). Residues 38-57 constitute a DNA-binding region (H-T-H motif); sequence LKELSEKVNSSVATCQRRVQ.

This is an uncharacterized protein from Haemophilus influenzae (strain ATCC 51907 / DSM 11121 / KW20 / Rd).